The chain runs to 855 residues: Leucine--tRNA ligase (855 aa).

The short motif at 45 to 55 (PYPSGRLHMGH) is the 'HIGH' region element. The 'KMSKS' region motif lies at 619 to 623 (KMSKS). Residue K622 coordinates ATP.

This sequence belongs to the class-I aminoacyl-tRNA synthetase family.

It is found in the cytoplasm. The catalysed reaction is tRNA(Leu) + L-leucine + ATP = L-leucyl-tRNA(Leu) + AMP + diphosphate. The polypeptide is Leucine--tRNA ligase (Hyphomonas neptunium (strain ATCC 15444)).